The chain runs to 629 residues: Phosphomethylpyrimidine synthase (629 aa).

Residues 1-24 form a disordered region; the sequence is MSTKPKNAAHLSESAQVDSGSVQP. Polar residues predominate over residues 13–24; the sequence is ESAQVDSGSVQP. Substrate-binding positions include Asn-233, Met-262, Tyr-291, His-327, 347–349, 388–391, and Glu-427; these read SRG and DGLR. His-431 lines the Zn(2+) pocket. Tyr-454 is a substrate binding site. A Zn(2+)-binding site is contributed by His-495. Residues Cys-575, Cys-578, and Cys-583 each contribute to the [4Fe-4S] cluster site.

Belongs to the ThiC family. Homodimer. Requires [4Fe-4S] cluster as cofactor.

It catalyses the reaction 5-amino-1-(5-phospho-beta-D-ribosyl)imidazole + S-adenosyl-L-methionine = 4-amino-2-methyl-5-(phosphooxymethyl)pyrimidine + CO + 5'-deoxyadenosine + formate + L-methionine + 3 H(+). Its pathway is cofactor biosynthesis; thiamine diphosphate biosynthesis. Its function is as follows. Catalyzes the synthesis of the hydroxymethylpyrimidine phosphate (HMP-P) moiety of thiamine from aminoimidazole ribotide (AIR) in a radical S-adenosyl-L-methionine (SAM)-dependent reaction. The protein is Phosphomethylpyrimidine synthase of Pseudomonas syringae pv. tomato (strain ATCC BAA-871 / DC3000).